We begin with the raw amino-acid sequence, 289 residues long: 2,3-dimethylmalate lyase (289 aa).

This sequence belongs to the isocitrate lyase/PEP mutase superfamily. In terms of assembly, homotetramer. Mg(2+) serves as cofactor.

The catalysed reaction is (2R,3S)-2,3-dimethylmalate = propanoate + pyruvate. It participates in cofactor degradation; nicotinate degradation; propanoate and pyruvate from 6-hydroxynicotinate: step 8/8. Its activity is regulated as follows. Completely inhibited by propionic anhydride and by cystamine. Irreversibly inhibited by the mercapto reagents iodoacetate and iodoacetamide. Unaffected by hydroxylamine. In terms of biological role, catalyzes the formation of proponate and pyruvate from (2R,3S)-2,3-dimethylmalate. Has no activity toward dimethylmaleate, malate, citramalate, isocitrate and citrate. This chain is 2,3-dimethylmalate lyase, found in Eubacterium barkeri (Clostridium barkeri).